We begin with the raw amino-acid sequence, 800 residues long: Phenylalanine--tRNA ligase beta subunit (800 aa).

The tRNA-binding domain maps to 39–154 (TKDIKNLVVG…EAQVPGTDAL (116 aa)). In terms of domain architecture, B5 spans 408 to 483 (AFITPIDITA…RIYGYDDIPS (76 aa)). Residues Asp-461, Asp-467, Glu-470, and Glu-471 each coordinate Mg(2+). An FDX-ACB domain is found at 708-800 (PRFPGMSRDI…ALIEQGAVIR (93 aa)).

The protein belongs to the phenylalanyl-tRNA synthetase beta subunit family. Type 1 subfamily. Tetramer of two alpha and two beta subunits. Requires Mg(2+) as cofactor.

It is found in the cytoplasm. It carries out the reaction tRNA(Phe) + L-phenylalanine + ATP = L-phenylalanyl-tRNA(Phe) + AMP + diphosphate + H(+). This is Phenylalanine--tRNA ligase beta subunit from Staphylococcus aureus (strain COL).